Here is a 140-residue protein sequence, read N- to C-terminus: Nucleoside diphosphate kinase (140 aa).

Positions 11, 59, 87, 93, 104, and 114 each coordinate ATP. His-117 (pros-phosphohistidine intermediate) is an active-site residue.

It belongs to the NDK family. In terms of assembly, homotetramer. Mg(2+) serves as cofactor.

It localises to the cytoplasm. It carries out the reaction a 2'-deoxyribonucleoside 5'-diphosphate + ATP = a 2'-deoxyribonucleoside 5'-triphosphate + ADP. It catalyses the reaction a ribonucleoside 5'-diphosphate + ATP = a ribonucleoside 5'-triphosphate + ADP. Major role in the synthesis of nucleoside triphosphates other than ATP. The ATP gamma phosphate is transferred to the NDP beta phosphate via a ping-pong mechanism, using a phosphorylated active-site intermediate. The sequence is that of Nucleoside diphosphate kinase from Ruegeria pomeroyi (strain ATCC 700808 / DSM 15171 / DSS-3) (Silicibacter pomeroyi).